The sequence spans 394 residues: Elongation factor Tu (394 aa).

Positions 10–204 (KPHVNVGTIG…ALDTYIPEPE (195 aa)) constitute a tr-type G domain. The tract at residues 19–26 (GHVDHGKT) is G1. A GTP-binding site is contributed by 19–26 (GHVDHGKT). Position 26 (threonine 26) interacts with Mg(2+). A G2 region spans residues 60-64 (GITIN). Residues 81–84 (DCPG) are G3. GTP contacts are provided by residues 81–85 (DCPGH) and 136–139 (NKCD). The G4 stretch occupies residues 136–139 (NKCD). The segment at 174–176 (SAL) is G5.

The protein belongs to the TRAFAC class translation factor GTPase superfamily. Classic translation factor GTPase family. EF-Tu/EF-1A subfamily. As to quaternary structure, monomer.

It is found in the cytoplasm. It carries out the reaction GTP + H2O = GDP + phosphate + H(+). In terms of biological role, GTP hydrolase that promotes the GTP-dependent binding of aminoacyl-tRNA to the A-site of ribosomes during protein biosynthesis. This is Elongation factor Tu from Shewanella halifaxensis (strain HAW-EB4).